A 327-amino-acid polypeptide reads, in one-letter code: Thiamine-monophosphate kinase (327 aa).

Asp30, Ser45, Ser46, and Asp47 together coordinate Mg(2+). Residue His54 participates in substrate binding. Asp76 is a binding site for Mg(2+). Residues Tyr106, 123–124 (GD), and Arg149 each bind ATP. Asp124 contributes to the Mg(2+) binding site. Asp221 contributes to the Mg(2+) binding site. Ser223 is an ATP binding site. Residue Asp224 coordinates Mg(2+). Residues Glu268 and Phe321 each coordinate substrate.

The protein belongs to the thiamine-monophosphate kinase family.

It carries out the reaction thiamine phosphate + ATP = thiamine diphosphate + ADP. It participates in cofactor biosynthesis; thiamine diphosphate biosynthesis; thiamine diphosphate from thiamine phosphate: step 1/1. Functionally, catalyzes the ATP-dependent phosphorylation of thiamine-monophosphate (TMP) to form thiamine-pyrophosphate (TPP), the active form of vitamin B1. This is Thiamine-monophosphate kinase from Synechococcus elongatus (strain ATCC 33912 / PCC 7942 / FACHB-805) (Anacystis nidulans R2).